A 70-amino-acid chain; its full sequence is Large ribosomal subunit protein eL38 (70 aa).

This sequence belongs to the eukaryotic ribosomal protein eL38 family.

In Bombyx mori (Silk moth), this protein is Large ribosomal subunit protein eL38 (RpL38).